Reading from the N-terminus, the 454-residue chain is tRNA(Ile)-lysidine synthase (454 aa).

31–36 (SGGADS) lines the ATP pocket.

This sequence belongs to the tRNA(Ile)-lysidine synthase family.

It is found in the cytoplasm. It carries out the reaction cytidine(34) in tRNA(Ile2) + L-lysine + ATP = lysidine(34) in tRNA(Ile2) + AMP + diphosphate + H(+). In terms of biological role, ligates lysine onto the cytidine present at position 34 of the AUA codon-specific tRNA(Ile) that contains the anticodon CAU, in an ATP-dependent manner. Cytidine is converted to lysidine, thus changing the amino acid specificity of the tRNA from methionine to isoleucine. This chain is tRNA(Ile)-lysidine synthase, found in Porphyromonas gingivalis (strain ATCC 33277 / DSM 20709 / CIP 103683 / JCM 12257 / NCTC 11834 / 2561).